We begin with the raw amino-acid sequence, 248 residues long: MPEHAPDGVRPARPHHKLTADGRRMREVLTYSRRGSRFSPRQQQAWAAYAERWWVPDEAVDDPGFTLAGCFERSAPLIVEIGSGIGESTVALAAARPDHDVVAIEVWRPGVADTLGRIGAAGLSNVRLLSVDAVWSMAHLVEPDSLAALWTFFPDPWHKAKHHKRRLVTASFARLVAGRLAPGAEWRLATDWADYADQMVEVLDAEPMLEGGVVERWAERPVTKFERKGIAAGRAITDLAYRRRGAAR.

Positions 80, 105, 132, and 155 each coordinate S-adenosyl-L-methionine. The active site involves D155. Substrate is bound by residues K159, D191, and 223–226 (TKFE).

Belongs to the class I-like SAM-binding methyltransferase superfamily. TrmB family.

It carries out the reaction guanosine(46) in tRNA + S-adenosyl-L-methionine = N(7)-methylguanosine(46) in tRNA + S-adenosyl-L-homocysteine. The protein operates within tRNA modification; N(7)-methylguanine-tRNA biosynthesis. Functionally, catalyzes the formation of N(7)-methylguanine at position 46 (m7G46) in tRNA. This Nocardioides sp. (strain ATCC BAA-499 / JS614) protein is tRNA (guanine-N(7)-)-methyltransferase.